Here is a 525-residue protein sequence, read N- to C-terminus: Glutamyl-tRNA(Gln) amidotransferase subunit A, mitochondrial (525 aa).

Active-site charge relay system residues include Lys76 and Ser168. Catalysis depends on Ser192, which acts as the Acyl-ester intermediate.

It belongs to the amidase family. GatA subfamily. As to quaternary structure, subunit of the heterotrimeric GatCAB amidotransferase (AdT) complex, composed of A (QRSL1), B (GATB) and C (GATC) subunits.

It is found in the mitochondrion. It catalyses the reaction L-glutamyl-tRNA(Gln) + L-glutamine + ATP + H2O = L-glutaminyl-tRNA(Gln) + L-glutamate + ADP + phosphate + H(+). In terms of biological role, allows the formation of correctly charged Gln-tRNA(Gln) through the transamidation of misacylated Glu-tRNA(Gln) in the mitochondria. The reaction takes place in the presence of glutamine and ATP through an activated gamma-phospho-Glu-tRNA(Gln). In Mus musculus (Mouse), this protein is Glutamyl-tRNA(Gln) amidotransferase subunit A, mitochondrial (Qrsl1).